Consider the following 341-residue polypeptide: Binder of USO1 and GRH1 protein 1 (341 aa).

The tract at residues 1 to 181 (MSEQESDEVK…AADDLFANDG (181 aa)) is disordered. Residue Ser-2 is modified to N-acetylserine. Residues 2-41 (SEQESDEVKRMKQLEEARKRVEELKKKKNKKNKGKKNKNS) are a coiled coil. Over residues 7–26 (DEVKRMKQLEEARKRVEELK) the composition is skewed to basic and acidic residues. Positions 27 to 39 (KKKNKKNKGKKNK) are enriched in basic residues. Positions 69 to 78 (KANSTKSENN) are enriched in polar residues. Over residues 79-91 (DQNDVDEESEEKE) the composition is skewed to acidic residues. The residue at position 87 (Ser-87) is a Phosphoserine. Positions 118–132 (GKDDAENTKKEEVQE) are enriched in basic and acidic residues. The segment covering 158–171 (VQTQEGNEPSNTSE) has biased composition (polar residues). Residue Ser-170 is modified to Phosphoserine. Residues 188-272 (LTTIKKQKEE…LKLAEAKAAR (85 aa)) adopt a coiled-coil conformation. Thr-292 is modified (phosphothreonine).

As to quaternary structure, interacts with GRH1 (via C-terminus), probably forming a heterooligomer consisting of a GRH1 dimer and a BUG1 dimer.

The protein localises to the cytoplasm. It localises to the golgi apparatus. Its subcellular location is the cis-Golgi network membrane. Involved in ER to Golgi vesicle-mediated transport by either facilitating USO1-dependent and -independent tethering or increasing target accuracy of fusion events of COPII-coated vesicles. This is Binder of USO1 and GRH1 protein 1 from Saccharomyces cerevisiae (strain ATCC 204508 / S288c) (Baker's yeast).